We begin with the raw amino-acid sequence, 175 residues long: uncharacterized protein (175 aa).

The Extracellular segment spans residues 1–2 (ME). Residues 3–23 (SIILSIAIFIGVLLGTSVGAG) form a helical membrane-spanning segment. Over 24 to 151 (SGSSISPDVD…TGISTTMNAR (128 aa)) the chain is Cytoplasmic. Residues 26-88 (SSISPDVDAG…DVGAGSGSSI (63 aa)) form a disordered region. Residues 59–78 (FSGSSTSPDVDAGSGSSTSP) are compositionally biased toward polar residues. Residues 152–172 (VAVLITAAILSAPVTAIALLE) traverse the membrane as a helical segment. Residues 173 to 175 (ARR) are Extracellular-facing.

Its subcellular location is the membrane. This is an uncharacterized protein from Saccharomyces cerevisiae (strain ATCC 204508 / S288c) (Baker's yeast).